The sequence spans 441 residues: Tubulin beta chain, nucleomorph (441 aa).

Residues Gln-11, Glu-69, Ser-138, Gly-142, Thr-143, Gly-144, Asn-204, and Asn-226 each contribute to the GTP site. A Mg(2+)-binding site is contributed by Glu-69.

This sequence belongs to the tubulin family. As to quaternary structure, dimer of alpha and beta chains. A typical microtubule is a hollow water-filled tube with an outer diameter of 25 nm and an inner diameter of 15 nM. Alpha-beta heterodimers associate head-to-tail to form protofilaments running lengthwise along the microtubule wall with the beta-tubulin subunit facing the microtubule plus end conferring a structural polarity. Microtubules usually have 13 protofilaments but different protofilament numbers can be found in some organisms and specialized cells. Mg(2+) serves as cofactor.

Its function is as follows. Tubulin is the major constituent of microtubules, a cylinder consisting of laterally associated linear protofilaments composed of alpha- and beta-tubulin heterodimers. Microtubules grow by the addition of GTP-tubulin dimers to the microtubule end, where a stabilizing cap forms. Below the cap, tubulin dimers are in GDP-bound state, owing to GTPase activity of alpha-tubulin. This is Tubulin beta chain, nucleomorph (tubB) from Guillardia theta (Cryptophyte).